The sequence spans 533 residues: Na(+)/H(+) antiporter NhaB (533 aa).

The next 11 helical transmembrane spans lie at 10-30, 67-87, 96-116, 131-165, 209-229, 247-267, 310-330, 355-375, 396-416, 454-474, and 485-505; these read IGNFLGNSPKWYKIAILSFLI, PGGLLAIEAVAIGMTSASQVL, VLLLLVFMVAGIYFMKQLLLF, VSLLFCLASAFLSAFLDALTVIAVIITVAVGFYSI, LLMHAGVGTALGGVCTMVGEP, IRMSPVTVPVFIAGILTCYIV, AFIGVWLIAGLALHLASVGLI, EEALPFTALLAVFFSVVAVII, LVIFYIANGLLSMVSDNVFVG, ATPNGQAAFLFLLTSALAPLI, and ALPYTIVLSIVGVMAIQIGFL.

This sequence belongs to the NhaB Na(+)/H(+) (TC 2.A.34) antiporter family.

It localises to the cell inner membrane. The enzyme catalyses 2 Na(+)(in) + 3 H(+)(out) = 2 Na(+)(out) + 3 H(+)(in). Na(+)/H(+) antiporter that extrudes sodium in exchange for external protons. The protein is Na(+)/H(+) antiporter NhaB of Shewanella oneidensis (strain ATCC 700550 / JCM 31522 / CIP 106686 / LMG 19005 / NCIMB 14063 / MR-1).